Reading from the N-terminus, the 354-residue chain is UDP-glucose 4-epimerase 1 (354 aa).

8–39 serves as a coordination point for NAD(+); sequence TILVTGGAGYIGSHTVLQLLQLGFRVVVLDNL. Serine 133 is a substrate binding site. The active-site Proton acceptor is the tyrosine 157.

Belongs to the NAD(P)-dependent epimerase/dehydratase family. Requires NAD(+) as cofactor.

The catalysed reaction is UDP-alpha-D-glucose = UDP-alpha-D-galactose. It functions in the pathway carbohydrate metabolism; galactose metabolism. Its function is as follows. Catalyzes the interconversion between UDP-glucose and UDP-galactose. The sequence is that of UDP-glucose 4-epimerase 1 (UGE-1) from Oryza sativa subsp. japonica (Rice).